Here is a 1087-residue protein sequence, read N- to C-terminus: Platelet-derived growth factor receptor alpha (1087 aa).

Positions 1–24 (MMPAMRASLILGCLLIIGPWAILA) are cleaved as a signal peptide. At 25-530 (ENPLPTIFPD…PTLRSELTVA (506 aa)) the chain is on the extracellular side. Ig-like C2-type domains are found at residues 27–114 (PLPT…SEIE) and 118–211 (IYIY…LQTW). C50 and C101 are oxidised to a cystine. N-linked (GlcNAc...) asparagine glycosylation is found at N77 and N104. C151 and C192 are disulfide-bonded. Residues N216, N282, N309, N356, N362, N461, and N471 are each glycosylated (N-linked (GlcNAc...) asparagine). Ig-like C2-type domains are found at residues 217–309 (ISVE…KKTN), 315–409 (KGFI…KSYS), and 417–519 (PALI…LKLV). A disulfide bridge links C238 with C293. An intrachain disulfide couples C438 to C503. The helical transmembrane segment at 531 to 551 (AAVLVLLVIVIISLIVLVIIW) threads the bilayer. The Cytoplasmic segment spans residues 552 to 1087 (KQKPRYEIRW…SSDLVEDSFL (536 aa)). Residues Y574 and Y576 each carry the phosphotyrosine; by autocatalysis modification. Residues 595 to 970 (LVLGRILGSG…CYETVLHDFL (376 aa)) enclose the Protein kinase domain. Residues 601–609 (LGSGAFGKV) and K629 each bind ATP. Phosphotyrosine; by autocatalysis occurs at positions 722, 733, 744, 756, and 764. The active-site Proton acceptor is the D818. Phosphotyrosine; by autocatalysis is present on residues Y849, Y988, and Y1017. Residues 1017–1064 (YIIPLPDIDPVSEDESGKRNRHSSQTSEESAIETGSSSSTFIKRDDET) are disordered. Residues 1039 to 1057 (SSQTSEESAIETGSSSSTF) show a composition bias toward polar residues.

It belongs to the protein kinase superfamily. Tyr protein kinase family. CSF-1/PDGF receptor subfamily. Interacts with homodimeric pdgfa, pdgfb and pdgfc, and with heterodimers formed by pdgfa and pdgfb. Monomer in the absence of bound ligand. Interaction with dimeric pdgfa, pdgfb and/or pdgfc leads to receptor dimerization, where both pdgfra homodimers and heterodimers with pdgfrb are observed. Ubiquitinated, leading to its internalization and degradation. Post-translationally, autophosphorylated on tyrosine residues upon ligand binding. Autophosphorylation occurs in trans, i.e. one subunit of the dimeric receptor phosphorylates tyrosine residues on the other subunit.

It is found in the cell membrane. Its subcellular location is the cell projection. The protein localises to the cilium. It localises to the golgi apparatus. The enzyme catalyses L-tyrosyl-[protein] + ATP = O-phospho-L-tyrosyl-[protein] + ADP + H(+). With respect to regulation, present in an inactive conformation in the absence of bound ligand. Binding of pdgfa and/or pdgfb leads to dimerization and activation by autophosphorylation on tyrosine residues. Its function is as follows. Tyrosine-protein kinase that acts as a cell-surface receptor for pdgfa, pdgfb and pdgfc and plays an essential role in the regulation of embryonic development, cell proliferation, survival and chemotaxis. Depending on the context, promotes or inhibits cell proliferation and cell migration. Plays an important role in the differentiation of bone marrow-derived mesenchymal stem cells. Required for normal skeleton development. Required for normal development of the gastrointestinal tract. Plays a role in cell migration and chemotaxis in wound healing. Plays a role in platelet activation, secretion of agonists from platelet granules, and in thrombin-induced platelet aggregation. Binding of its cognate ligands - homodimeric pdgfa, homodimeric pdgfb, heterodimers formed by pdgfa and pdgfb or homodimeric pdgfc -leads to the activation of several signaling cascades; the response depends on the nature of the bound ligand and is modulated by the formation of heterodimers between pdgfra and pdgfrb. Phosphorylates pik3r1, plcg1, and ptpn11. Activation of plcg1 leads to the production of the cellular signaling molecules diacylglycerol and inositol 1,4,5-trisphosphate, mobilization of cytosolic Ca(2+) and the activation of protein kinase C. Phosphorylates pik3r1, the regulatory subunit of phosphatidylinositol 3-kinase, and thereby mediates activation of the akt1 signaling pathway. Mediates activation of hras and of the MAP kinases mapk1/erk2 and/or mapk3/erk1. Promotes activation of stat family members stat1, stat3 and stat5a and/or stat5b. Receptor signaling is down-regulated by protein phosphatases that dephosphorylate the receptor and its down-stream effectors, and by rapid internalization of the activated receptor. The protein is Platelet-derived growth factor receptor alpha (pdgfra) of Xenopus laevis (African clawed frog).